The chain runs to 627 residues: Phosphomethylpyrimidine synthase (627 aa).

A compositionally biased stretch (polar residues) spans 1-24; it reads MSATQKNNITRLEQLDRQSTQPFP. A disordered region spans residues 1 to 29; sequence MSATQKNNITRLEQLDRQSTQPFPNSRKV. Substrate is bound by residues asparagine 231, methionine 260, tyrosine 289, histidine 325, 345-347, 386-389, and glutamate 425; these read SRG and DGLR. Histidine 429 is a binding site for Zn(2+). Residue tyrosine 452 coordinates substrate. Histidine 493 lines the Zn(2+) pocket. [4Fe-4S] cluster-binding residues include cysteine 573, cysteine 576, and cysteine 581.

Belongs to the ThiC family. In terms of assembly, homodimer. [4Fe-4S] cluster is required as a cofactor.

It carries out the reaction 5-amino-1-(5-phospho-beta-D-ribosyl)imidazole + S-adenosyl-L-methionine = 4-amino-2-methyl-5-(phosphooxymethyl)pyrimidine + CO + 5'-deoxyadenosine + formate + L-methionine + 3 H(+). The protein operates within cofactor biosynthesis; thiamine diphosphate biosynthesis. Functionally, catalyzes the synthesis of the hydroxymethylpyrimidine phosphate (HMP-P) moiety of thiamine from aminoimidazole ribotide (AIR) in a radical S-adenosyl-L-methionine (SAM)-dependent reaction. The polypeptide is Phosphomethylpyrimidine synthase (Pseudomonas paraeruginosa (strain DSM 24068 / PA7) (Pseudomonas aeruginosa (strain PA7))).